The following is a 637-amino-acid chain: 1-deoxy-D-xylulose-5-phosphate synthase (637 aa).

Thiamine diphosphate-binding positions include His74 and 115-117 (GHS). Asp146 contributes to the Mg(2+) binding site. Thiamine diphosphate is bound by residues 147–148 (GA), Asn175, Tyr285, and Glu366. A Mg(2+)-binding site is contributed by Asn175.

The protein belongs to the transketolase family. DXPS subfamily. In terms of assembly, homodimer. The cofactor is Mg(2+). It depends on thiamine diphosphate as a cofactor.

It catalyses the reaction D-glyceraldehyde 3-phosphate + pyruvate + H(+) = 1-deoxy-D-xylulose 5-phosphate + CO2. Its pathway is metabolic intermediate biosynthesis; 1-deoxy-D-xylulose 5-phosphate biosynthesis; 1-deoxy-D-xylulose 5-phosphate from D-glyceraldehyde 3-phosphate and pyruvate: step 1/1. Catalyzes the acyloin condensation reaction between C atoms 2 and 3 of pyruvate and glyceraldehyde 3-phosphate to yield 1-deoxy-D-xylulose-5-phosphate (DXP). The sequence is that of 1-deoxy-D-xylulose-5-phosphate synthase from Pelotomaculum thermopropionicum (strain DSM 13744 / JCM 10971 / SI).